The following is a 429-amino-acid chain: Histidinol dehydrogenase (429 aa).

Residues Y131, Q193, and N216 each contribute to the NAD(+) site. S239, Q261, and H264 together coordinate substrate. The Zn(2+) site is built by Q261 and H264. Residues E327 and H328 each act as proton acceptor in the active site. Substrate is bound by residues H328, D361, E415, and H420. D361 contacts Zn(2+). H420 provides a ligand contact to Zn(2+).

The protein belongs to the histidinol dehydrogenase family. Requires Zn(2+) as cofactor.

It catalyses the reaction L-histidinol + 2 NAD(+) + H2O = L-histidine + 2 NADH + 3 H(+). It participates in amino-acid biosynthesis; L-histidine biosynthesis; L-histidine from 5-phospho-alpha-D-ribose 1-diphosphate: step 9/9. Catalyzes the sequential NAD-dependent oxidations of L-histidinol to L-histidinaldehyde and then to L-histidine. The polypeptide is Histidinol dehydrogenase (hisD) (Methanocaldococcus jannaschii (strain ATCC 43067 / DSM 2661 / JAL-1 / JCM 10045 / NBRC 100440) (Methanococcus jannaschii)).